Consider the following 285-residue polypeptide: Sulfotransferase 2A2 (285 aa).

6 residues coordinate 3'-phosphoadenylyl sulfate: lysine 44, serine 45, glycine 46, threonine 47, asparagine 48, and tryptophan 49. Catalysis depends on histidine 99, which acts as the Proton acceptor. 3'-phosphoadenylyl sulfate is bound by residues arginine 121, serine 129, tyrosine 184, serine 218, arginine 247, lysine 248, and glycine 249.

It belongs to the sulfotransferase 1 family. As to expression, detected in liver.

It localises to the cytoplasm. The enzyme catalyses an alcohol + 3'-phosphoadenylyl sulfate = an alkyl sulfate + adenosine 3',5'-bisphosphate + H(+). In terms of biological role, sulfotransferase that utilizes 3'-phospho-5'-adenylyl sulfate (PAPS) as sulfonate donor to catalyze the sulfate conjugation of a potential wide variety of acceptor molecules bearing a hydroxyl group. Sulfonation increases the water solubility of most compounds, and therefore their renal excretion, but it can also result in bioactivation to form active metabolites. This Rattus norvegicus (Rat) protein is Sulfotransferase 2A2.